Consider the following 173-residue polypeptide: Large ribosomal subunit protein bL9 (173 aa).

The interval 150 to 173 (KQEDKKSLSKKLNKADEQGERAEV) is disordered.

It belongs to the bacterial ribosomal protein bL9 family.

Binds to the 23S rRNA. The chain is Large ribosomal subunit protein bL9 from Borreliella burgdorferi (strain ZS7) (Borrelia burgdorferi).